Consider the following 419-residue polypeptide: MLLDTLQTQFRHYFPTQRNFVLGLSGGIDSIVLLHLLAELQLNLRAVHIHHGLSPNADNWAAFCEQVCKRLKIPFILQKVTVDRSEGIEAGARAARYQAIGEIIQPNEVLVTAHHLDDQTETFLLALKRGSGIKGLSAMQAVGFWQNFTIFRPLLNVSKAQIEQYALQQQFTWIEDESNHDSHYDRNFLRNEVLPIVNQRWQHFSQMVARSAQHCAEQQMLLEELLAQELQRYADFSEKRLNIEAFPQFSLAKQQQLIRLWLEKCGAQMPSTAQLMQIIQQTIYADVDKNPQLKLADFWLRRYQHHLYLTGELLEPDDFCQPLFAQQSLTLPDGIGELQHLGDSIIYQKSGKIDRLLLPKVLVNAPLQVKLTHQGKVKQYAKPMREEMKKRYQQAQVPVWLRKRTPLIFFHDQLVFICH.

25 to 30 (SGGIDS) lines the ATP pocket.

Belongs to the tRNA(Ile)-lysidine synthase family.

Its subcellular location is the cytoplasm. It catalyses the reaction cytidine(34) in tRNA(Ile2) + L-lysine + ATP = lysidine(34) in tRNA(Ile2) + AMP + diphosphate + H(+). Its function is as follows. Ligates lysine onto the cytidine present at position 34 of the AUA codon-specific tRNA(Ile) that contains the anticodon CAU, in an ATP-dependent manner. Cytidine is converted to lysidine, thus changing the amino acid specificity of the tRNA from methionine to isoleucine. The polypeptide is tRNA(Ile)-lysidine synthase (Actinobacillus pleuropneumoniae serotype 7 (strain AP76)).